The following is a 95-amino-acid chain: UPF0358 protein BCE_3996 (95 aa).

This sequence belongs to the UPF0358 family.

The polypeptide is UPF0358 protein BCE_3996 (Bacillus cereus (strain ATCC 10987 / NRS 248)).